The sequence spans 193 residues: Ion-translocating oxidoreductase complex subunit B (193 aa).

Residues 1 to 26 are hydrophobic; that stretch reads MSTMLIAVILLTLLALFFGVLLGFAA. Residues 32 to 90 enclose the 4Fe-4S domain; that stretch reads EGNPIVDELEAILPQTQCGQCGYPGCRPYAEAIANGDKVNKCPPGGTATMEKLASLMGV. Cys-49, Cys-52, Cys-57, Cys-73, Cys-114, Cys-117, Cys-120, Cys-124, Cys-144, Cys-147, Cys-150, and Cys-154 together coordinate [4Fe-4S] cluster. 4Fe-4S ferredoxin-type domains lie at 105 to 134 and 136 to 164; these read KVAYIREDECIGCTKCIQACPVDAIIGAGK and MHTVLTADCTGCDLCVEPCPVDCIDMLPV.

Belongs to the 4Fe4S bacterial-type ferredoxin family. RnfB subfamily. As to quaternary structure, the complex is composed of six subunits: RnfA, RnfB, RnfC, RnfD, RnfE and RnfG. The cofactor is [4Fe-4S] cluster.

The protein resides in the cell inner membrane. Its function is as follows. Part of a membrane-bound complex that couples electron transfer with translocation of ions across the membrane. In Shewanella sp. (strain MR-4), this protein is Ion-translocating oxidoreductase complex subunit B.